Reading from the N-terminus, the 170-residue chain is Envelope protein 168 (170 aa).

Residue methionine 1 is a topological domain, intravirion. The chain crosses the membrane as a helical span at residues 2-22 (FYPVVQILIGIILVIILILGF). At 23–170 (YHLKRKPPKK…TVMGIARNVL (148 aa)) the chain is on the virion surface side.

The protein belongs to the asfivirus envelope protein p22 family.

It is found in the virion membrane. Its subcellular location is the host cell membrane. The chain is Envelope protein 168 from African swine fever virus (isolate Tick/South Africa/Pretoriuskop Pr4/1996) (ASFV).